Consider the following 47-residue polypeptide: PhoP/PhoQ regulator MgrB (47 aa).

A helical membrane pass occupies residues 6–26 (WVILIIVLIACVILWTQTINV).

This sequence belongs to the MgrB family. In terms of assembly, may form homooligomers. Probably interacts with the periplasmic domain of PhoQ.

Its subcellular location is the cell inner membrane. In terms of biological role, phoP-regulated transcription is redox-sensitive, being activated when the periplasm becomes more reducing. MgrB acts between DsbA/DsbB and PhoP/PhoQ in this pathway. Represses PhoP/PhoQ signaling, possibly by binding to the periplasmic domain of PhoQ, altering its activity and that of downstream effector PhoP. The chain is PhoP/PhoQ regulator MgrB from Enterobacter sp. (strain 638).